The primary structure comprises 378 residues: Chorismate synthase (378 aa).

Arg-49 is a binding site for NADP(+). FMN is bound by residues Arg-126–Ser-128, Gly-287, Lys-302–Thr-306, and Arg-328.

Belongs to the chorismate synthase family. As to quaternary structure, homotetramer. FMNH2 is required as a cofactor.

The enzyme catalyses 5-O-(1-carboxyvinyl)-3-phosphoshikimate = chorismate + phosphate. It participates in metabolic intermediate biosynthesis; chorismate biosynthesis; chorismate from D-erythrose 4-phosphate and phosphoenolpyruvate: step 7/7. Its function is as follows. Catalyzes the anti-1,4-elimination of the C-3 phosphate and the C-6 proR hydrogen from 5-enolpyruvylshikimate-3-phosphate (EPSP) to yield chorismate, which is the branch point compound that serves as the starting substrate for the three terminal pathways of aromatic amino acid biosynthesis. This reaction introduces a second double bond into the aromatic ring system. The chain is Chorismate synthase from Synechococcus sp. (strain JA-3-3Ab) (Cyanobacteria bacterium Yellowstone A-Prime).